The primary structure comprises 1382 residues: Hepatocyte growth factor receptor (1382 aa).

The signal sequence occupies residues 1–24 (MKAPAVLAPGILVLLFTLVPRSHG). The Extracellular portion of the chain corresponds to 25–933 (ECKEALVKSE…VIVQPDQNFM (909 aa)). The Sema domain maps to 27–516 (KEALVKSEMN…TGNKITKIPL (490 aa)). N-linked (GlcNAc...) asparagine glycosylation occurs at asparagine 45. 4 cysteine pairs are disulfide-bonded: cysteine 95-cysteine 101, cysteine 98-cysteine 160, cysteine 133-cysteine 141, and cysteine 173-cysteine 176. An N-linked (GlcNAc...) asparagine glycan is attached at asparagine 106. Residues asparagine 203 and asparagine 359 are each glycosylated (N-linked (GlcNAc...) asparagine). Intrachain disulfides connect cysteine 299–cysteine 364 and cysteine 386–cysteine 398. N-linked (GlcNAc...) asparagine glycosylation is found at asparagine 400 and asparagine 406. 4 cysteine pairs are disulfide-bonded: cysteine 521-cysteine 539, cysteine 527-cysteine 562, cysteine 530-cysteine 546, and cysteine 542-cysteine 552. IPT/TIG domains are found at residues 564–656 (PAIY…FSYV), 658–740 (PVIT…FSYR), and 743–837 (PIVD…LTYV). Threonine 583 carries O-linked (Man) threonine glycosylation. N-linked (GlcNAc...) asparagine glycans are attached at residues asparagine 608, asparagine 614, and asparagine 636. Residues threonine 677 and threonine 762 are each glycosylated (O-linked (Man) threonine). Residues asparagine 786 and asparagine 880 are each glycosylated (N-linked (GlcNAc...) asparagine). A helical membrane pass occupies residues 934 to 956 (GLIVGGVSISIILLLLLGLFLWL). Residues 957–1382 (KKKKRIKDLG…QDNVDGTVDT (426 aa)) lie on the Cytoplasmic side of the membrane. The residue at position 967 (serine 967) is a Phosphoserine. Threonine 978 is modified (phosphothreonine). Phosphoserine occurs at positions 991, 998, and 1001. Tyrosine 1004 is modified (phosphotyrosine). The Protein kinase domain maps to 1079-1346 (VHFSEVIGRG…RISTIFSTFI (268 aa)). Residues 1085–1093 (IGRGHFGCV) and lysine 1111 contribute to the ATP site. The active-site Proton acceptor is the aspartate 1205. The tract at residues 1213 to 1382 (LDEKFTVKVA…QDNVDGTVDT (170 aa)) is interaction with RANBP9. Tyrosine 1231 bears the Phosphotyrosine mark. Phosphotyrosine; by autocatalysis is present on residues tyrosine 1235 and tyrosine 1236. Residue threonine 1290 is modified to Phosphothreonine. An interaction with MUC20 region spans residues 1321–1360 (WHPKAEMRPSFSELVSRISTIFSTFIGEHYVHVNATYVNV). Tyrosine 1350 and tyrosine 1357 each carry phosphotyrosine; by autocatalysis. Tyrosine 1366 is modified (phosphotyrosine).

It belongs to the protein kinase superfamily. Tyr protein kinase family. In terms of assembly, heterodimer made of an alpha chain (50 kDa) and a beta chain (145 kDa) which are disulfide linked. Binds PLXNB1. Interacts when phosphorylated with downstream effectors including STAT3, PIK3R1, SRC, PCLG1, GRB2 and GAB1. Interacts with SPSB1, SPSB2 and SPSB4. Interacts with INPP5D/SHIP1. When phosphorylated at Tyr-1357, interacts with INPPL1/SHIP2. Interacts with RANBP9 and RANBP10, as well as SPSB1, SPSB2, SPSB3 and SPSB4. SPSB1 binding occurs in the presence and in the absence of HGF, however HGF treatment has a positive effect on this interaction. Interacts with MUC20; prevents interaction with GRB2 and suppresses hepatocyte growth factor-induced cell proliferation. Interacts with GRB10. Interacts with PTPN1 and PTPN2. Interacts with HSP90AA1 and HSP90AB1; the interaction suppresses MET kinase activity. Interacts with tensin TNS3. Interacts (when phosphorylated) with tensin TNS4 (via SH2 domain); the interaction increases MET protein stability by inhibiting MET endocytosis and subsequent lysosomal degradation. Post-translationally, autophosphorylated in response to ligand binding on Tyr-1235 and Tyr-1236 in the kinase domain leading to further phosphorylation of Tyr-1350 and Tyr-1357 in the C-terminal multifunctional docking site. Dephosphorylated by PTPRJ at Tyr-1350 and Tyr-1366. Dephosphorylated by PTPN1 and PTPN2. In terms of processing, ubiquitinated. Ubiquitination by CBL regulates the receptor stability and activity through proteasomal degradation. O-mannosylation of IPT/TIG domains by TMEM260 is required for protein maturation. O-mannosylated residues are composed of single mannose glycans that are not elongated or modified.

It is found in the membrane. The enzyme catalyses L-tyrosyl-[protein] + ATP = O-phospho-L-tyrosyl-[protein] + ADP + H(+). In its inactive state, the C-terminal tail interacts with the catalytic domain and inhibits the kinase activity. Upon ligand binding, the C-terminal tail is displaced and becomes phosphorylated, thus increasing the kinase activity. Its function is as follows. Receptor tyrosine kinase that transduces signals from the extracellular matrix into the cytoplasm by binding to hepatocyte growth factor/HGF ligand. Regulates many physiological processes including proliferation, scattering, morphogenesis and survival. Ligand binding at the cell surface induces autophosphorylation of MET on its intracellular domain that provides docking sites for downstream signaling molecules. Following activation by ligand, interacts with the PI3-kinase subunit PIK3R1, PLCG1, SRC, GRB2, STAT3 or the adapter GAB1. Recruitment of these downstream effectors by MET leads to the activation of several signaling cascades including the RAS-ERK, PI3 kinase-AKT, or PLCgamma-PKC. The RAS-ERK activation is associated with the morphogenetic effects while PI3K/AKT coordinates prosurvival effects. During embryonic development, MET signaling plays a role in gastrulation, development and migration of muscles and neuronal precursors, angiogenesis and kidney formation. In adults, participates in wound healing as well as organ regeneration and tissue remodeling. Also promotes differentiation and proliferation of hematopoietic cells. The polypeptide is Hepatocyte growth factor receptor (MET) (Oryctolagus cuniculus (Rabbit)).